The sequence spans 456 residues: Rap guanine nucleotide exchange factor-like 1 (456 aa).

The region spanning 218-454 (EPEDVANHLT…FELSYKLEAN (237 aa)) is the Ras-GEF domain.

Probable guanine nucleotide exchange factor (GEF). This is Rap guanine nucleotide exchange factor-like 1 (RAPGEFL1) from Pongo pygmaeus (Bornean orangutan).